Reading from the N-terminus, the 453-residue chain is Divalent metal cation transporter MntH (453 aa).

11 helical membrane-spanning segments follow: residues 39–59 (LAFL…GNWI), 66–86 (AQYG…AMLL), 114–134 (AIMF…AEVI), 146–166 (IPLI…LFIM), 175–195 (AIVG…VYIS), 217–237 (GILY…NLYL), 270–290 (LSIA…LFFG), 310–330 (PALG…ALLA), 362–382 (LITR…FKGN), 388–408 (QLLV…LIPL), and 427–447 (INII…YLII).

Belongs to the NRAMP family.

The protein resides in the cell membrane. H(+)-stimulated, divalent metal cation uptake system. The chain is Divalent metal cation transporter MntH from Staphylococcus epidermidis (strain ATCC 12228 / FDA PCI 1200).